Consider the following 3095-residue polypeptide: MRSSKSKEVPLPNPRNSQSKETIQDVTTSWDALSQTKAALRHIENKLEVTPTSTAVIDSVMDTKKSASATRKISRKDGRCLDDSWASAPTSKFSKPRKEKSRSPLRATTLESNVKKNNRVEFREPLVSYRETHGTPFSLSPSHLESKHVYCIHEEKPESGKQMVVSREDRNIQCCDFESAQPSVISDTVVRFLNDGPAIDALHSSECLMKMGVHVRTEDEMPNRTKGSENNSKPSLNNMEHDVDPKVMLLSDSSPSSSACNSQRSDISKRQQHDIKLEKLKERIRKQWEHSEEINGQAQTLGHIDHPVMVVNVDNSVTTKVRKVATAPPAPAYKGFNPSETKIRTPDGKVWQEAEFQSMSRELYRDLALQFTDDTSVKEKPVEKSKEKKVVKPVRKIQKVTQLSNPECKTGSSRLISTSSWRDGQKLVKKILGPAPKMEQKERRPTSNDRSGRERVAKFGGHIGRAESDPKLDVSHKQLPRSSARSRSSRAWSETNIVKSALSLPDNKQEESAALNKDFLPVEIRGILDDLQLDSSAQAVRQEAGEGQNQKSSAPEQVPRSHSPVKRKPDKITANEDPPVISKKRHYDTDEVRQYIVRQQEERRRRQHEEKKAQKEATEQKNKRLQELYRRQREAFSKAKTVPPSDPLVSRRLQETYSKLLLEKTLLEEPARQHVTQDIQARPGYQPSGESDKENKIQERPPSASSSSDLSLSEPPQPLARRDLMEPTWMQPDRLSPRVHSSQAQPLAGTTENLLSHLLHLEHVGILHKDYESVLPAKKSHNTASGPLTFTPQPYLTSQAPHPDALLKPSTSQYKTKLDRIEALKATAASLSSRIESEAKKLAGASINYGSVWNTECDVKLAPQENGPWTKAISPPVKEDIEDAFSARIQKMLGTCVSHAAFDDELPGVGSLSEYKKLPEMIRPQSAISSLRMKSPSPKPGGLLAQLCRRQTDSSSSDIQACSQERAKRSLCSSIDSVSEGPLLSEGSLSEEEERRDARPLLKVAEILKEKEFCAGERNSYEPIKEFQKEAEKFLPLFGHIGGTQSKGPWEELAKGSPHSVINIFTKSYQLYGKGFEDRGTLVSRPLNATATPLSSVSYEDDFVSSPGSGTLTERKSTLESQVDGSSLGVQEEHLSRQFACDLASVDATSQHSSGARSAGSTRSSSASKGKKGKKDKMDWLDSLTGSAQNPLIDEEKVQSDSERGSHPSRKLGTGSKLAVGDSEQTLDAESTLEDLSGHSVSGSSDKGRSQKTPTSPLSPSSQKLLQFDLPGTSLERSKSSVIVPPTTTGFKPTAAFTDVNKTEMASAPGPQRFSPAGLQHRMAAELSYLSALEESVRQLSDVERVRGIALAQQESVSLAQIIKAQQQRHERDLALLKLKAEQEALECQRQLEETRNKTAQVHAESLQQVVKSQREVTEVLQEATCKIAAQQSETARLTTDAARQICEMAELTRTHLADAITTSGVPLATLYDHQRQHFPDFMRKLRTKAETDRISHSASHSQSKEGAVDSKRQKFSPSRDSYSESSRYKSHDYRSSGSSRQDSPSVPPSKENEKPFHGEKMESSVDEQLQTAADDSLRSDSIPSLPDEKDSTSIATEYSLKFDESMTEDEIEEKSFRSLLPSESHRRFNMEKKRGHHDDSDEDASPDKTALSSTKELSMPFSGGQDSFSKFTMEMVRQYMKEEEVRAAHQSSLLRLREKALKEKTKAELAWLEHQKKHLRDKGEDDKMPPLRKKQRGLLLRLQQEKAEIKRLQEANKAARKERQLILKQQEEIERIRQTTIKLQEKLKSAGEKKLGSLADDDEAEDNKAASPGPPGLETRSPSPISISSSETSSIMQKLKSMRSRMDEKFLTKREQKLMQRRQHAEELLEWKRRLDAEEAEIQQMEKQALAAWDKELVKPRTPKKEQESQRTEQKGIASEEGSPMPSYSPRNSESCIPEDLGSPSDLCVPSEARVQAQPGSPEHSTLTEEMVFSQELESTSPSKHSPPKSCLSMSKQESSKASHRTEGHCHLPVKSHQPCYSWSDESLSMTQSETTSDQSDIEGRIRALKDELRKRKSVVEQLKREQRKRQKERLKAQEASLLRQLETYDEFIKKTEGELSQDLDISPTSKFQMKTLSSVSEKPKIKPHPLHRSETAKTWKSVTESERSRGSLASIAEHVDSSLSCSERAISERSLSAYAKRGVELDSRIEHLQASSPDLSSRKAQTESRDSLESAPSLSPVKELNAPDRIYDVSEAKAEDTSQKSEIQEIESMKLESSEVEDACCKQSGGSEVLLKLDLASETLSSKELPSDSANVQQDLDKPATETSHEKEEALKEDQSNHSTDDRSPDIQSAGGIPEQGCRESGDSTCSGQLSVPKESSYSEDFEVSSFRKGISADEISKDDSEGSSPSSLRKDSQSHRDRSQLTRSSRSRATGSGSDEEISECLGEKSLSVHSGVHSERLLELRSPTELMKSKERSDVGHEQGGTEPLPLAATEELLDFHIGDRVLIGSVQPGTLRFKGETDFAKGFWAGVELDKPEGNNNGTYDGIVYFVCKDKHGIFAPPQKISHLLENFDDTDINEDEESYSDEQYQPYNQEQKDIKCLKDRENNIAEYFCEKSLPSMHNTDASVDKDRSLNIETDTSEVLEVHGHQQPSVDPLISYKENKVLVSDATESVPAAAGAATSDNTFSGESKQQQLAEKEENFYSQVLEKPSTPLLDLLTREKNQLEAQLKSSISEEKKSKQQLETVSLLTDSLLQVFVKDTVSQLQQVKKARNEKIQLSNQEFLDQKKVPPQDLPQNTEEQSPSVPSCFLRSELEDEKEEISSPDMCPRPESPVFGASGQEELAKRLAELEISREFLSALDDQDWFDEDFGLSSSHKIQKNKAEETIVPLMAEPKRAPQKPCETLLAVPHTAEEVESLVHNAAEELWKWKELGQDLHGLSLPTTFLGGASKGLDIGSTSRRVYKQAVFDLTKEIFEEIFAEDPNVNQPVWMKPCRINSSYFRRVKNPNNLDEIKHFITTEVLKLLSLKKEPNHKTDWQKMMKFGRKKRDRVDHILVQELHEEEAQWVNYDEDELCVKMQLADGIFETLIKDTIDVLNQISEKQGRMLLV.

2 disordered regions span residues 1–24 and 63–105; these read MRSS…ETIQ and TKKS…RSPL. Residues 14 to 24 show a composition bias toward polar residues; it reads PRNSQSKETIQ. A phosphoserine mark is found at Ser-84 and Ser-140. Disordered stretches follow at residues 219–239, 251–272, and 430–493; these read DEMP…LNNM, SDSS…KRQQ, and KILG…RAWS. Residues 228 to 238 show a composition bias toward polar residues; the sequence is SENNSKPSLNN. The segment covering 251-265 has biased composition (low complexity); it reads SDSSPSSSACNSQRS. Composition is skewed to basic and acidic residues over residues 438 to 457 and 464 to 476; these read MEQK…ERVA and GRAE…DVSH. Ser-468 is subject to Phosphoserine. A compositionally biased stretch (low complexity) spans 481-491; the sequence is RSSARSRSSRA. The residue at position 503 (Ser-503) is a Phosphoserine. Disordered stretches follow at residues 538–623 and 671–718; these read QAVR…QKNK and ARQH…PPQP. 2 stretches are compositionally biased toward basic and acidic residues: residues 587 to 623 and 690 to 699; these read YDTD…QKNK and ESDKENKIQE. Residues 596–641 are a coiled coil; that stretch reads IVRQQEERRRRQHEEKKAQKEATEQKNKRLQELYRRQREAFSKAKT. Ser-691 carries the phosphoserine modification. Low complexity predominate over residues 701–714; the sequence is PPSASSSSDLSLSE. Ser-874 and Ser-935 each carry phosphoserine. A disordered region spans residues 977-996; that stretch reads SVSEGPLLSEGSLSEEEERR. Over residues 979–988 the composition is skewed to low complexity; the sequence is SEGPLLSEGS. Residue Ser-1057 is modified to Phosphoserine. 2 disordered regions span residues 1099 to 1128 and 1151 to 1265; these read YEDD…GSSL and QHSS…SQKL. Polar residues predominate over residues 1119–1128; that stretch reads LESQVDGSSL. A compositionally biased stretch (low complexity) spans 1153-1168; that stretch reads SSGARSAGSTRSSSAS. Basic and acidic residues predominate over residues 1194 to 1206; that stretch reads DEEKVQSDSERGS. At Ser-1200 the chain carries Phosphoserine. Over residues 1251 to 1265 the composition is skewed to low complexity; it reads QKTPTSPLSPSSQKL. Thr-1253 is subject to Phosphothreonine. Phosphoserine is present on residues Ser-1256 and Ser-1259. Residues 1363 to 1402 adopt a coiled-coil conformation; sequence IKAQQQRHERDLALLKLKAEQEALECQRQLEETRNKTAQV. Disordered stretches follow at residues 1490–1668, 1720–1739, 1787–1864, and 1893–2017; these read AETD…GQDS, LRDK…QRGL, KLKS…QRRQ, and AWDK…PVKS. The span at 1503 to 1513 shows a compositional bias: basic and acidic residues; that stretch reads QSKEGAVDSKR. 2 stretches are compositionally biased toward low complexity: residues 1517 to 1526 and 1536 to 1545; these read SPSRDSYSES and SSGSSRQDSP. Residues 1551 to 1564 are compositionally biased toward basic and acidic residues; sequence KENEKPFHGEKMES. At Ser-1606 the chain carries Phosphoserine. Residues 1624–1640 are compositionally biased toward basic and acidic residues; that stretch reads ESHRRFNMEKKRGHHDD. 2 positions are modified to phosphoserine: Ser-1641 and Ser-1646. The stretch at 1700–1793 forms a coiled coil; it reads KALKEKTKAE…LQEKLKSAGE (94 aa). Residues 1787–1796 are compositionally biased toward basic and acidic residues; sequence KLKSAGEKKL. Ser-1812 bears the Phosphoserine mark. Over residues 1819–1835 the composition is skewed to low complexity; the sequence is ETRSPSPISISSSETSS. Composition is skewed to basic and acidic residues over residues 1845-1864 and 1894-1915; these read SRMD…QRRQ and WDKE…RTEQ. Positions 1850-1893 form a coiled coil; that stretch reads KFLTKREQKLMQRRQHAEELLEWKRRLDAEEAEIQQMEKQALAA. Ser-1930 bears the Phosphoserine mark. Low complexity predominate over residues 1980–1994; the sequence is STSPSKHSPPKSCLS. Positions 1999 to 2011 are enriched in basic and acidic residues; it reads ESSKASHRTEGHC. The stretch at 2043-2092 forms a coiled coil; it reads IEGRIRALKDELRKRKSVVEQLKREQRKRQKERLKAQEASLLRQLETYDE. Phosphoserine is present on Ser-2108. Disordered stretches follow at residues 2116–2155, 2191–2265, 2286–2427, and 2440–2471; these read KTLS…GSLA, IEHL…VEDA, LSSK…EISE, and VHSE…GGTE. The segment covering 2133–2151 has biased composition (basic and acidic residues); it reads HRSETAKTWKSVTESERSR. A Phosphoserine modification is found at Ser-2198. Composition is skewed to basic and acidic residues over residues 2202–2214 and 2227–2259; these read SSRK…RDSL and NAPD…KLES. Over residues 2286–2300 the composition is skewed to polar residues; sequence LSSKELPSDSANVQQ. A compositionally biased stretch (basic and acidic residues) spans 2301-2331; it reads DLDKPATETSHEKEEALKEDQSNHSTDDRSP. The span at 2349 to 2362 shows a compositional bias: polar residues; sequence DSTCSGQLSVPKES. Basic and acidic residues-rich tracts occupy residues 2377 to 2387 and 2395 to 2407; these read ISADEISKDDS and LRKD…DRSQ. The span at 2409–2420 shows a compositional bias: low complexity; it reads TRSSRSRATGSG. A phosphoserine mark is found at Ser-2421 and Ser-2450. The span at 2455-2465 shows a compositional bias: basic and acidic residues; sequence MKSKERSDVGH. In terms of domain architecture, CAP-Gly spans 2504-2546; that stretch reads GETDFAKGFWAGVELDKPEGNNNGTYDGIVYFVCKDKHGIFAP. At Thr-2671 the chain carries Phosphothreonine. Residues 2700–2731 adopt a coiled-coil conformation; that stretch reads LLDLLTREKNQLEAQLKSSISEEKKSKQQLET. The interval 2767–2793 is disordered; sequence QEFLDQKKVPPQDLPQNTEEQSPSVPS. The segment covering 2780–2791 has biased composition (polar residues); the sequence is LPQNTEEQSPSV. Phosphoserine occurs at positions 2809 and 2818.

As to quaternary structure, part of a ternary complex that contains CEP350, CEP43 and MAPRE1. Interacts (via C-terminus) directly with CEP43 (via N-terminus). Interacts with NR1H3, PPARA, PPARD and PPARG. Interacts directly with microtubules. Interacts with the fusion protein CEP43-FGFR1, and by doing so recruits and activates PI3K and PLC-gamma. Interacts with CYLD. Interacts with CFAP157. Interacts with CEP19 (via C-terminus). Interacts with CEP78; promoting CEP78 localization to centrosome and centriole. In terms of processing, phosphorylated during mitosis.

The protein localises to the cytoplasm. Its subcellular location is the cytoskeleton. It localises to the microtubule organizing center. It is found in the centrosome. The protein resides in the spindle. The protein localises to the nucleus. Its subcellular location is the centriole. It localises to the cilium basal body. Its function is as follows. Plays an essential role in centriole growth by stabilizing a procentriolar seed composed of at least, SASS6 and CPAP. Required for anchoring microtubules to the centrosomes and for the integrity of the microtubule network. Recruits PPARA to discrete subcellular compartments and thereby modulates PPARA activity. Required for ciliation. This chain is Centrosome-associated protein 350, found in Mus musculus (Mouse).